Reading from the N-terminus, the 521-residue chain is Ankyrin repeat domain-containing protein 34B (521 aa).

ANK repeat units lie at residues 9–38 (TESN…YINE), 42–79 (RGET…DPNI), 83–113 (FGKT…DPSL), and 117–146 (TGFS…AKGK). The tract at residues 161 to 188 (QTTRQYLNVPPSPGIEGNNSPSPCTSPS) is disordered. Polar residues predominate over residues 177–188 (GNNSPSPCTSPS).

It belongs to the ANKRD34 family.

It is found in the cytoplasm. Its subcellular location is the nucleus. This Xenopus laevis (African clawed frog) protein is Ankyrin repeat domain-containing protein 34B (ankrd34b).